The chain runs to 306 residues: Foldase protein PrsA (306 aa).

An N-terminal signal peptide occupies residues 1-20 (MRRKIALFLALIFVGVSLVS). Residue C21 is the site of N-palmitoyl cysteine attachment. C21 carries the S-diacylglycerol cysteine lipid modification. The PpiC domain maps to 165–255 (FEVMRARHIL…YGYHIIKSEG (91 aa)).

It belongs to the PrsA family.

The protein resides in the cell membrane. The enzyme catalyses [protein]-peptidylproline (omega=180) = [protein]-peptidylproline (omega=0). In terms of biological role, plays a major role in protein secretion by helping the post-translocational extracellular folding of several secreted proteins. This chain is Foldase protein PrsA, found in Caldanaerobacter subterraneus subsp. tengcongensis (strain DSM 15242 / JCM 11007 / NBRC 100824 / MB4) (Thermoanaerobacter tengcongensis).